Consider the following 300-residue polypeptide: Apolipoprotein E (300 aa).

The N-terminal stretch at 1–18 (MKVLWAVLVVTLLAGCQA) is a signal peptide. Residues 74–246 (VLMEDTMKEV…RLDEVREQME (173 aa)) form an 8 X 22 AA approximate tandem repeats region. 8 tandem repeats follow at residues 75–95 (LMED…QELA), 96–117 (PMAE…ARLG), 118–139 (ADME…SMLG), 140–161 (HSAE…KRLL), 162–183 (RDAE…EGAE), 184–205 (RSVS…LRTA), 206–224 (ALTS…ERLR), and 225–243 (GRLE…EVRE). M137 carries the post-translational modification Methionine sulfoxide. Residue S141 is modified to Phosphoserine. The LDL and other lipoprotein receptors binding stretch occupies residues 152–162 (HLRKLRKRLLR). A heparin-binding site is contributed by 156-159 (LRKR). The lipid-binding and lipoprotein association stretch occupies residues 204 to 274 (TAALTSQPLQ…GWFEPMMEDI (71 aa)). 220–227 (GERLRGRL) contacts heparin. Residues 262-274 (RLKGWFEPMMEDI) form a specificity for association with VLDL region.

This sequence belongs to the apolipoprotein A1/A4/E family. As to quaternary structure, homotetramer. May interact with ABCA1; functionally associated with ABCA1 in the biogenesis of HDLs. May interact with APP/A4 amyloid-beta peptide; the interaction is extremely stable in vitro but its physiological significance is unclear. May interact with MAPT. May interact with MAP2. In the cerebrospinal fluid, interacts with secreted SORL1. Interacts with PMEL; this allows the loading of PMEL luminal fragment on ILVs to induce fibril nucleation. Post-translationally, APOE exists as multiple glycosylated and sialylated glycoforms within cells and in plasma. The extent of glycosylation and sialylation are tissue and context specific. Glycated in plasma VLDL. In terms of processing, phosphorylated by FAM20C in the extracellular medium.

Its subcellular location is the secreted. The protein resides in the extracellular space. The protein localises to the extracellular matrix. It localises to the extracellular vesicle. It is found in the endosome. Its subcellular location is the multivesicular body. APOE is an apolipoprotein, a protein associating with lipid particles, that mainly functions in lipoprotein-mediated lipid transport between organs via the plasma and interstitial fluids. APOE is a core component of plasma lipoproteins and is involved in their production, conversion and clearance. Apolipoproteins are amphipathic molecules that interact both with lipids of the lipoprotein particle core and the aqueous environment of the plasma. As such, APOE associates with chylomicrons, chylomicron remnants, very low density lipoproteins (VLDL) and intermediate density lipoproteins (IDL) but shows a preferential binding to high-density lipoproteins (HDL). It also binds a wide range of cellular receptors including the LDL receptor/LDLR, the LDL receptor-related proteins LRP1, LRP2 and LRP8 and the very low-density lipoprotein receptor/VLDLR that mediate the cellular uptake of the APOE-containing lipoprotein particles. Finally, APOE also has a heparin-binding activity and binds heparan-sulfate proteoglycans on the surface of cells, a property that supports the capture and the receptor-mediated uptake of APOE-containing lipoproteins by cells. A main function of APOE is to mediate lipoprotein clearance through the uptake of chylomicrons, VLDLs, and HDLs by hepatocytes. APOE is also involved in the biosynthesis by the liver of VLDLs as well as their uptake by peripheral tissues ensuring the delivery of triglycerides and energy storage in muscle, heart and adipose tissues. By participating in the lipoprotein-mediated distribution of lipids among tissues, APOE plays a critical role in plasma and tissues lipid homeostasis. APOE is also involved in two steps of reverse cholesterol transport, the HDLs-mediated transport of cholesterol from peripheral tissues to the liver, and thereby plays an important role in cholesterol homeostasis. First, it is functionally associated with ABCA1 in the biogenesis of HDLs in tissues. Second, it is enriched in circulating HDLs and mediates their uptake by hepatocytes. APOE also plays an important role in lipid transport in the central nervous system, regulating neuron survival and sprouting. The protein is Apolipoprotein E (APOE) of Dinomys branickii (Pacarana).